A 363-amino-acid chain; its full sequence is Putative agmatine deiminase 1 (363 aa).

Catalysis depends on Cys356, which acts as the Amidino-cysteine intermediate.

The protein belongs to the agmatine deiminase family.

It catalyses the reaction agmatine + H2O = N-carbamoylputrescine + NH4(+). The chain is Putative agmatine deiminase 1 from Listeria monocytogenes serovar 1/2a (strain ATCC BAA-679 / EGD-e).